We begin with the raw amino-acid sequence, 201 residues long: Small ribosomal subunit protein uS4c (201 aa).

The disordered stretch occupies residues 20–43 (GLTSKRPRAGSDLRNQSRSGKRSQ). In terms of domain architecture, S4 RNA-binding spans 89-149 (MRLDNILFRL…NEQKSRALIQ (61 aa)).

It belongs to the universal ribosomal protein uS4 family. Part of the 30S ribosomal subunit. Contacts protein S5. The interaction surface between S4 and S5 is involved in control of translational fidelity.

The protein localises to the plastid. It localises to the chloroplast. Functionally, one of the primary rRNA binding proteins, it binds directly to 16S rRNA where it nucleates assembly of the body of the 30S subunit. With S5 and S12 plays an important role in translational accuracy. This chain is Small ribosomal subunit protein uS4c (rps4), found in Vitis vinifera (Grape).